The sequence spans 244 residues: N-(5'-phosphoribosyl)anthranilate isomerase 3, chloroplastic (244 aa).

The N-terminal 32 residues, 1-32, are a transit peptide targeting the chloroplast; it reads MSTGISSDLHLHPRALNFSKTSKSGLSNRKVS.

Belongs to the TrpF family.

It is found in the plastid. The protein resides in the chloroplast. The enzyme catalyses N-(5-phospho-beta-D-ribosyl)anthranilate = 1-(2-carboxyphenylamino)-1-deoxy-D-ribulose 5-phosphate. It functions in the pathway amino-acid biosynthesis; L-tryptophan biosynthesis; L-tryptophan from chorismate: step 3/5. This Arabidopsis thaliana (Mouse-ear cress) protein is N-(5'-phosphoribosyl)anthranilate isomerase 3, chloroplastic (PAI3).